The chain runs to 230 residues: Cutinase 1 (230 aa).

The signal sequence occupies residues 1-16; it reads MKFFALTTLLAATASA. Residues 17 to 31 constitute a propeptide that is removed on maturation; the sequence is LPTSNPAQELEARQL. Glycine 32 is modified (N-D-glucuronoyl glycine). A disulfide bridge links cysteine 47 with cysteine 125. The Nucleophile role is filled by serine 136. A disulfide bond links cysteine 187 and cysteine 194. Aspartate 191 is a catalytic residue. Histidine 204 acts as the Proton donor/acceptor in catalysis.

It belongs to the cutinase family. Post-translationally, the 2 disulfide bonds play a critical role in holding the catalytic residues in juxta-position; reduction of the disulfide bridges results in the complete inactivation of the enzyme. In terms of processing, O-glycosylated; contains one mole each of mannose, arabinose, N-acetylglucosamine, and glucuronic acid.

The protein localises to the secreted. The catalysed reaction is cutin + H2O = cutin monomers.. Its activity is regulated as follows. Inhibited by n-undecyl phosphonate (C11Y4). Inhibited by paraoxon. In terms of biological role, catalyzes the hydrolysis of complex carboxylic polyesters found in the cell wall of plants. Degrades cutin, a macromolecule that forms the structure of the plant cuticle. Allows pathogenic fungi to penetrate through the cuticular barrier into the host plant during the initial stage of fungal infection. The chain is Cutinase 1 (CUT1) from Fusarium vanettenii (Neocosmospora pisi).